Consider the following 123-residue polypeptide: Large-conductance mechanosensitive channel (123 aa).

2 consecutive transmembrane segments (helical) span residues 14–34 (VIDM…VKSL) and 67–87 (GSFL…FLMV).

It belongs to the MscL family. As to quaternary structure, homopentamer.

It is found in the cell membrane. In terms of biological role, channel that opens in response to stretch forces in the membrane lipid bilayer. May participate in the regulation of osmotic pressure changes within the cell. The sequence is that of Large-conductance mechanosensitive channel from Limosilactobacillus reuteri (strain DSM 20016) (Lactobacillus reuteri).